We begin with the raw amino-acid sequence, 321 residues long: 2-oxoglutarate-dependent dioxygenase frbH (321 aa).

The tract at residues S77–D97 is disordered. A Fe2OG dioxygenase domain is found at E169–A273. H194, D196, and H251 together coordinate Fe cation. R264 serves as a coordination point for 2-oxoglutarate.

Belongs to the iron/ascorbate-dependent oxidoreductase family.

The protein operates within antifungal biosynthesis. 2-oxoglutarate-dependent dioxygenase; part of the gene cluster that mediates the biosynthesis of the antifungal antibiotic FR901469, an inhibitor of beta-1,3-glucansynthase, exerting antifungal activity against the pathogenes Candida albicans and Aspergillus fumigatus. FR901469 is a cyclic depsipeptide containing 12 amino acid residues and a fatty acid chain. The NRPS frbI contains 12 modules responsible for the formation of the depsipeptide backbone which is denoted as Acyl-Thr-Ala-Tyr-Val-4OHPro-Thr-Thr-3OHPro-threo3OHGln-Gly-Thr-Orn-OH (C71H116N14O23). The PKS frbB is probably involved in the production of the hydrocarbon chain, and the acyl-CoA ligase frbC might be involved in the transport of the chain to the peptide ptoduct of frbI. Because FR901469 contains 3 hydroxylated amino acid residues, the 3 oxygenases frbA, frbH, and frbJ might be participating in amino acid hydroxylation. As no thioesterase domains were detected in frbI or frbB, the thioesterases frbD and frbE may instead release and cyclize the products of the NRPS and PKS, respectively. This is 2-oxoglutarate-dependent dioxygenase frbH from Dothideomycetidae sp. (strain 11243) (Fungal sp. (strain No.11243)).